A 103-amino-acid chain; its full sequence is Small ribosomal subunit protein uS10 (103 aa).

The protein belongs to the universal ribosomal protein uS10 family. In terms of assembly, part of the 30S ribosomal subunit.

Functionally, involved in the binding of tRNA to the ribosomes. The sequence is that of Small ribosomal subunit protein uS10 from Buchnera aphidicola subsp. Cinara cedri (strain Cc).